The primary structure comprises 123 residues: T-complex protein 1 subunit alpha (123 aa).

Position 68 (Gly68) interacts with ADP.

This sequence belongs to the TCP-1 chaperonin family. As to quaternary structure, component of the chaperonin-containing T-complex (TRiC), a hexadecamer composed of two identical back-to-back stacked rings enclosing a protein folding chamber. Each ring is made up of eight different subunits: TCP1/CCT1, CCT2, CCT3, CCT4, CCT5, CCT6A/CCT6, CCT7, CCT8. Interacts with PACRG. Interacts with GBA1. Interacts with DLEC1.

Its subcellular location is the cytoplasm. It is found in the cytosol. It localises to the cytoskeleton. The protein localises to the microtubule organizing center. The protein resides in the centrosome. The catalysed reaction is ATP + H2O = ADP + phosphate + H(+). Component of the chaperonin-containing T-complex (TRiC), a molecular chaperone complex that assists the folding of actin, tubulin and other proteins upon ATP hydrolysis. The TRiC complex mediates the folding of WRAP53/TCAB1, thereby regulating telomere maintenance. As part of the TRiC complex may play a role in the assembly of BBSome, a complex involved in ciliogenesis regulating transports vesicles to the cilia. The polypeptide is T-complex protein 1 subunit alpha (Mesocricetus auratus (Golden hamster)).